Here is a 324-residue protein sequence, read N- to C-terminus: Signal peptidase I (324 aa).

Met1 carries the blocked amino end (Met) modification. At 1 to 3 the chain is on the periplasmic side; sequence MAN. Residues 4-22 traverse the membrane as a helical segment; it reads MFALILVIATLVTGILWCV. The Cytoplasmic segment spans residues 23-58; it reads DKFFFAPKRRERQAAAQAAAGDSLDKATLKKVAPKP. Residues 59 to 77 traverse the membrane as a helical segment; it reads GWLETGASVFPVLAIVLIV. The Periplasmic segment spans residues 78 to 324; that stretch reads RSFIYEPFQI…LRLSRIGGIH (247 aa). Active-site residues include Ser91 and Lys146. Residues Cys171 and Cys177 are joined by a disulfide bond.

It belongs to the peptidase S26 family.

It localises to the cell inner membrane. It carries out the reaction Cleavage of hydrophobic, N-terminal signal or leader sequences from secreted and periplasmic proteins.. The sequence is that of Signal peptidase I (lepB) from Escherichia coli (strain K12).